A 218-amino-acid chain; its full sequence is Protein Syd (218 aa).

The protein belongs to the Syd family.

It localises to the cell inner membrane. Functionally, interacts with the SecY protein in vivo. May bind preferentially to an uncomplexed state of SecY, thus functioning either as a chelating agent for excess SecY in the cell or as a regulatory factor that negatively controls the translocase function. The chain is Protein Syd from Shewanella denitrificans (strain OS217 / ATCC BAA-1090 / DSM 15013).